We begin with the raw amino-acid sequence, 237 residues long: Cytosolic-abundant heat soluble protein 1 (237 aa).

2 stretches are compositionally biased toward basic and acidic residues: residues 1 to 17 (MPYE…KTEQ) and 91 to 105 (VDMR…EARR). Disordered stretches follow at residues 1–35 (MPYE…VARE) and 85–105 (SGAS…EARR). Residues 98–201 (KLAEEARRDA…KEALERSRMA (104 aa)) adopt a coiled-coil conformation. CAHS motif regions lie at residues 132-150 (YRHQ…LEKQ) and 169-187 (QKRE…LDRE). The segment at 212-237 (AGHTVSGGTTVSSVDKVETVRERKHH) is disordered. Residues 226–237 (DKVETVRERKHH) are compositionally biased toward basic and acidic residues.

The protein belongs to the Cytosolic-abundant heat soluble protein (CAHS) family.

It is found in the cytoplasm. The protein resides in the nucleus. Its function is as follows. CAHS proteins are cytosolic heat soluble proteins that seem to contribute to the anhydrobiosis in tardigrades, but their specific mechanisms are yet to be identified. It is possible that protection during anhydrobiosis might occur via the stabilization of vitrifying small molecules such as sugars, but not via the direct glass transition of CAHS proteins themselves. This Ramazzottius varieornatus (Water bear) protein is Cytosolic-abundant heat soluble protein 1.